A 4911-amino-acid polypeptide reads, in one-letter code: Histone-lysine N-methyltransferase 2C (4911 aa).

Positions 1-101 (MSSEEDKSVE…EDAEAEVDNS (101 aa)) are disordered. The segment covering 12–28 (PQPPPPPPEEPGAPAPS) has biased composition (pro residues). Phosphoserine occurs at positions 28 and 46. A DNA-binding region (a.T hook) is located at residues 34-46 (KRPRGRPRKDGAS). Basic residues predominate over residues 50 to 59 (RARKKPRSRG). A compositionally biased stretch (acidic residues) spans 64–81 (EDEDSMDGLETTETETIV). A Phosphoserine modification is found at Ser-89. A coiled-coil region spans residues 92 to 112 (EDAEAEVDNSKQLIPTLQRSV). The residue at position 113 (Ser-113) is a Phosphoserine. The interval 164–203 (RNQPSNKKDIDDNSNGTYEKMQNSAPRKQRGQRKERSPQQ) is disordered. The span at 176-189 (NSNGTYEKMQNSAP) shows a compositional bias: polar residues. Residue Ser-200 is modified to Phosphoserine. The segment at 227 to 262 (ELSLVGLPDAIDIQALFDSTGTCWAHHRCVEWSLGV) adopts a C2HC pre-PHD-type 1; degenerate zinc-finger fold. 4 consecutive PHD-type zinc fingers follow at residues 283-331 (ERCA…PEHI), 341-391 (DANC…CKVC), 388-438 (CKVC…CRIC), and 464-520 (DNLC…CKHL). The RING-type zinc-finger motif lies at 344 to 389 (CAVCDSPGDLLDQFFCTTCGQHYHGMCLDIAVTPLKRAGWQCPECK). The region spanning 436-489 (RICIECGTRSSSQWHHNCLICDNCYQQQDNLCPFCGKCYHPELQKDMLHCNMCK) is the DHHC domain. Positions 644-672 (EDKMEVTENIEVVTHQITVQQEQLQLLEE) form a coiled coil. Residues 721–730 (QGEKEQKENS) show a composition bias toward basic and acidic residues. The interval 721–742 (QGEKEQKENSELSTGLMDSEMT) is disordered. Residue Lys-758 is modified to N6-acetyllysine. Low complexity predominate over residues 763 to 791 (SSETESSFSSSADISKADVSSSPTPSSDL). Disordered regions lie at residues 763-798 (SSET…DMLH), 828-864 (PAIT…DISE), and 885-912 (GRGS…RSKL). Residues 830–842 (ITKRKFSPGRPRS) are compositionally biased toward basic residues. The span at 845 to 856 (GAWSTHNTVSPP) shows a compositional bias: polar residues. Ser-854 bears the Phosphoserine mark. 3 PHD-type zinc fingers span residues 957–1010 (QDMC…CTVC), 1007–1057 (CTVC…CVWC), and 1084–1139 (LSSC…CRPY). The tract at residues 1215–1324 (AVLQTPPDIQ…LPCRDDGWSE (110 aa)) is disordered. The span at 1224-1270 (QSEHSRDGEMDDSREGELMDCDGKSESSPEREAVDDETKGVEGTDGV) shows a compositional bias: basic and acidic residues. Residue Ser-1301 is modified to Phosphoserine. Residues 1338 to 1366 (TESTEKIKKRYRKRKNKLEETFPAYLQEA) are a coiled coil. A compositionally biased stretch (low complexity) spans 1406-1416 (PSLDPLLSSSS). Disordered regions lie at residues 1406–1431 (PSLD…DDPL) and 1458–1485 (HSDI…PLSE). Residues 1467–1482 (DPSSLPQPNVNQSSRP) show a composition bias toward polar residues. Lys-1508 carries the N6-acetyllysine modification. Disordered regions lie at residues 1604–1630 (FNPM…DTMS) and 1709–2448 (VQMS…SPVA). Polar residues-rich tracts occupy residues 1610-1620 (DPNNSWTSSAP) and 1709-1727 (VQMS…SIDP). Positions 1729 to 1753 (SRIDSELFKDPLKQRESEHEQEWKF) are enriched in basic and acidic residues. Residues 1754-1787 (RQQMRQKSKQQAKIEATQKLEQVKNEQQQQQQQQ) adopt a coiled-coil conformation. Lys-1772 is modified (N6-acetyllysine). Residues 1788–1823 (FGSQHLLVQSGSDTPSSGIQSPLTPQPGNGNMSPAQ) are compositionally biased toward polar residues. Positions 1851–1860 (QAPPPPPAPS) are enriched in pro residues. Low complexity predominate over residues 1861–1875 (RIPIQDSLSQAQTSQ). A compositionally biased stretch (polar residues) spans 1927-1945 (TPLSSVSRPLQMNETTANR). Residue Ser-1987 is modified to Phosphoserine. Lys-2009 is subject to N6-acetyllysine. 4 stretches are compositionally biased toward polar residues: residues 2054 to 2065 (QDPYGSVSQASR), 2085 to 2094 (FSHNQSNDPY), 2115 to 2131 (AFSQ…QDPY), and 2144 to 2159 (SYSQ…TDPY). The segment covering 2173–2187 (PYSQQPQTPRPSTQT) has biased composition (low complexity). 3 stretches are compositionally biased toward polar residues: residues 2302–2319 (SPMT…SQTA), 2335–2353 (CASS…SGVS), and 2362–2375 (SGVT…NMAQ). The span at 2377 to 2389 (DTEKLRQRQKLRE) shows a compositional bias: basic and acidic residues. Residues 2390-2399 (IILQQQQQKK) are compositionally biased toward low complexity. Asymmetric dimethylarginine is present on residues Arg-2454 and Arg-2571. Disordered stretches follow at residues 2589–2694 (RHGN…SDDP), 2793–2887 (EPKK…RETA), 2925–2954 (EKSD…VSSL), and 2989–3029 (VNPG…SGPQ). Composition is skewed to polar residues over residues 2629-2645 (PPSQ…SSMV) and 2661-2682 (PLST…TQPS). Residues 2793–2811 (EPKKKEQENKTLVLSDKHS) are compositionally biased toward basic and acidic residues. An N6-acetyllysine mark is found at Lys-2802 and Lys-2809. A compositionally biased stretch (polar residues) spans 2814-2832 (KKSTVTNEVKTEVLSPNSK). Position 2828 is a phosphoserine (Ser-2828). The residue at position 2832 (Lys-2832) is an N6-acetyllysine. Basic and acidic residues predominate over residues 2833-2849 (VESKCETEKNDENKDNV). A compositionally biased stretch (polar residues) spans 2851–2860 (TPCSQASAHS). A compositionally biased stretch (basic and acidic residues) spans 2861 to 2884 (DLNDGEKTSLHPCDPDLFEKRTNR). Residue Lys-2867 is modified to N6-acetyllysine. The segment covering 3011–3029 (TQTGPQTSQSGTSSMSGPQ) has biased composition (low complexity). Coiled coils occupy residues 3054-3081 (LLQD…QRSE), 3173-3272 (NDSQ…QQQQ), and 3391-3433 (FSES…EMEQ). The span at 3205–3221 (HRKSKKALSAKQRTAKK) shows a compositional bias: basic residues. 5 disordered regions span residues 3205–3241 (HRKS…TEQQ), 3353–3409 (PPIA…EQQE), 3527–3583 (PNFS…HSYP), 3596–3919 (IIPE…MANG), and 4024–4053 (VKEE…SRRN). Composition is skewed to basic and acidic residues over residues 3222-3238 (AGRE…KHVT) and 3395-3409 (FQER…EQQE). Composition is skewed to polar residues over residues 3527–3549 (PNFS…QSPV), 3564–3583 (ANSS…HSYP), 3637–3658 (ISET…QADQ), and 3684–3701 (LPNS…TYAN). Basic and acidic residues predominate over residues 3703–3725 (EVDKLSMETPAKTEEIKLEKAET). At Lys-3714 the chain carries N6-acetyllysine. Ser-3758 carries the phosphoserine modification. The segment covering 3803-3812 (DCTKDNKLVE) has biased composition (basic and acidic residues). The span at 3878–3892 (MYSSTDTFTHLKQQN) shows a compositional bias: polar residues. The span at 3897–3911 (PPTPPASLPPTPPPM) shows a compositional bias: pro residues. A Phosphoserine modification is found at Ser-4034. Position 4139 is an asymmetric dimethylarginine (Arg-4139). The residue at position 4267 (Ser-4267) is a Phosphoserine. The segment at 4399-4439 (YRKCCFCHEEGDGLTDGPARLLNLDLDLWVHLNCALWSTEV) adopts a C2HC pre-PHD-type 2 zinc-finger fold. The PHD-type 8 zinc-finger motif lies at 4460–4507 (MKCVFCHKTGATSGCHRFRCTNIYHFTCAIKAQCMFFKDKTMLCPMHK). An FYR N-terminal domain is found at 4545–4605 (DHTFRVGSLI…CRYLCSIEEK (61 aa)). One can recognise an FYR C-terminal domain in the interval 4606–4691 (DGRPVFVIRI…EACENYTFRY (86 aa)). The WDR5 interaction motif (WIN) motif lies at 4707–4712 (GCARSE). An SET domain is found at 4771-4887 (SNVYLARSRI…KGEELCYDYK (117 aa)). S-adenosyl-L-methionine-binding positions include Tyr-4825 and 4848-4849 (NH). Positions 4851, 4899, 4901, and 4906 each coordinate Zn(2+). Positions 4895 to 4911 (HKIPCHCGAVNCRKWMN) constitute a Post-SET domain.

This sequence belongs to the class V-like SAM-binding methyltransferase superfamily. Histone-lysine methyltransferase family. TRX/MLL subfamily. Component of the MLL3 complex (also named ASCOM complex), at least composed of catalytic subunit KMT2C/MLL3, ASH2L, RBBP5, WDR5, NCOA6, DPY30, KDM6A, PAXIP1/PTIP, PAGR1 and alpha- and beta-tubulin. Forms a core complex with the evolutionary conserved subcomplex WRAD composed of WDR5, RBBP5, ASH2L/ASH2 and DPY30 subunits; WRAD differentially stimulates the methyltransferase activity. Interacts (via WIN motif) with WDR5. As to expression, highly expressed in testis and ovary, followed by brain and liver. Also expressed in placenta, peripherical blood, fetal thymus, heart, lung and kidney. Within brain, expression was highest in hippocampus, caudate nucleus, and substantia nigra. Not detected in skeletal muscle and fetal liver.

It is found in the nucleus. It catalyses the reaction L-lysyl(4)-[histone H3] + S-adenosyl-L-methionine = N(6)-methyl-L-lysyl(4)-[histone H3] + S-adenosyl-L-homocysteine + H(+). Its function is as follows. Histone methyltransferase that catalyzes methyl group transfer from S-adenosyl-L-methionine to the epsilon-amino group of 'Lys-4' of histone H3 (H3K4). Part of chromatin remodeling machinery predominantly forms H3K4me1 methylation marks at active chromatin sites where transcription and DNA repair take place. Likely plays a redundant role with KMT2D in enriching H3K4me1 mark on primed and active enhancer elements. The polypeptide is Histone-lysine N-methyltransferase 2C (KMT2C) (Homo sapiens (Human)).